Consider the following 218-residue polypeptide: Small ribosomal subunit protein uS3c (218 aa).

The KH type-2 domain occupies 47–118 (IQKTIKISSG…KLNIAITRIA (72 aa)).

It belongs to the universal ribosomal protein uS3 family. Part of the 30S ribosomal subunit.

Its subcellular location is the plastid. It localises to the chloroplast. The protein is Small ribosomal subunit protein uS3c (rps3) of Lotus japonicus (Lotus corniculatus var. japonicus).